A 356-amino-acid polypeptide reads, in one-letter code: Ubiquitin-conjugating enzyme E2 variant 3 (356 aa).

The segment at 1-83 (MSDQPGTSRP…LEDLHNYHRE (83 aa)) is disordered. Residues 18–32 (PTKTATRRRARPIAI) are compositionally biased toward polar residues. A compositionally biased stretch (basic and acidic residues) spans 63–76 (QPRKTVPKNVPLED). The UBC core domain maps to 169–324 (DIITEFMNRS…AREFVMKMAG (156 aa)).

Belongs to the ubiquitin-conjugating enzyme family. May interact with pmk-3. As to expression, expressed ubiquitously.

It is found in the nucleus. It localises to the cytoplasm. The protein resides in the cell projection. The protein localises to the dendrite. Its subcellular location is the axon. It is found in the cilium. Its function is as follows. Possible negative regulator of polyubiquitination. May modulate the activity of the p38 MAP kinase pnk-3. May have a role in axon termination and synaptic transmission at motor and mechanosensory neurons. Plays a role in intraflagellar transport in cilia and cilium length regulation. The protein is Ubiquitin-conjugating enzyme E2 variant 3 of Caenorhabditis elegans.